We begin with the raw amino-acid sequence, 350 residues long: Ribosome production factor 2 homolog (350 aa).

One can recognise a Brix domain in the interval 28-266; sequence KTCLFLRGTT…LGRMREPDPA (239 aa). Positions 192-202 are enriched in polar residues; the sequence is PTSSTSTNNDG. Disordered stretches follow at residues 192–219 and 301–350; these read PTSSTSTNNDGENPAPLPGMTDPRSIDP and MGKT…KVKG.

This sequence belongs to the RPF2 family. As to quaternary structure, component of a hexameric 5S RNP precursor complex, composed of 5S RNA, RRS1, RPF2, RPL5, RPL11 and SYO1; this complex acts as a precursor for ribosome assembly.

It localises to the nucleus. The protein resides in the nucleolus. In terms of biological role, involved in ribosomal large subunit assembly. This is Ribosome production factor 2 homolog from Chaetomium thermophilum (strain DSM 1495 / CBS 144.50 / IMI 039719) (Thermochaetoides thermophila).